The primary structure comprises 743 residues: NAD(P)H-quinone oxidoreductase subunit 5, chloroplastic (743 aa).

14 consecutive transmembrane segments (helical) span residues 9–29 (WIIP…LLLF), 40–60 (WAFH…DLSI), 89–109 (IDPL…MVLI), 125–145 (FAYM…SNLI), 147–167 (IYIF…FWFT), 184–204 (IGDL…GSFE), 219–239 (NEVN…GAVA), 258–278 (TPIS…FLVA), 280–300 (LLPL…IGII), 396–416 (TAFF…CFWS), 425–445 (WLYS…TAFY), 548–568 (LLPL…GIPF), 607–627 (IFSV…YKPV), and 723–743 (YLFL…FLNL).

It belongs to the complex I subunit 5 family. NDH is composed of at least 16 different subunits, 5 of which are encoded in the nucleus.

The protein resides in the plastid. Its subcellular location is the chloroplast thylakoid membrane. The enzyme catalyses a plastoquinone + NADH + (n+1) H(+)(in) = a plastoquinol + NAD(+) + n H(+)(out). The catalysed reaction is a plastoquinone + NADPH + (n+1) H(+)(in) = a plastoquinol + NADP(+) + n H(+)(out). Functionally, NDH shuttles electrons from NAD(P)H:plastoquinone, via FMN and iron-sulfur (Fe-S) centers, to quinones in the photosynthetic chain and possibly in a chloroplast respiratory chain. The immediate electron acceptor for the enzyme in this species is believed to be plastoquinone. Couples the redox reaction to proton translocation, and thus conserves the redox energy in a proton gradient. The protein is NAD(P)H-quinone oxidoreductase subunit 5, chloroplastic (ndhF) of Carpenteria californica (Tree anemone).